The primary structure comprises 261 residues: Cytochrome c oxidase subunit 3 (261 aa).

The Mitochondrial matrix portion of the chain corresponds to 1 to 15 (MTHQSHAYHMVKPSP). The helical transmembrane segment at 16-34 (WPLTGALSALLMTSGLAMW) threads the bilayer. Over 35–40 (FHFYST) the chain is Mitochondrial intermembrane. Residues 41–66 (TLLTLGLLTNTLTMYQWWRDVMREGT) form a helical membrane-spanning segment. Topologically, residues 67 to 72 (YQGHHT) are mitochondrial matrix. Residues 73–105 (PPVQKGLRYGMILFITSEVFFFAGFFWAFYHSS) form a helical membrane-spanning segment. Over 106 to 128 (LAPTPQLGGHWPPTGITPLNPLE) the chain is Mitochondrial intermembrane. The chain crosses the membrane as a helical span at residues 129 to 152 (VPLLNTSVLLASGVSITWAHHSLM). Topologically, residues 153–155 (ENN) are mitochondrial matrix. The helical transmembrane segment at 156–183 (RNQMIQALLITILLGLYFTLLQASEYFE) threads the bilayer. Over 184–190 (SPFTISD) the chain is Mitochondrial intermembrane. Residues 191–223 (GIYGSTFFVATGFHGLHVIIGSTFLTICLIRQL) form a helical membrane-spanning segment. Topologically, residues 224–232 (MFHFTSKHH) are mitochondrial matrix. The helical transmembrane segment at 233 to 256 (FGFQAAAWYWHFVDVVWLFLYVSI) threads the bilayer. Residues 257–261 (YWWGS) are Mitochondrial intermembrane-facing.

It belongs to the cytochrome c oxidase subunit 3 family. As to quaternary structure, component of the cytochrome c oxidase (complex IV, CIV), a multisubunit enzyme composed of 14 subunits. The complex is composed of a catalytic core of 3 subunits MT-CO1, MT-CO2 and MT-CO3, encoded in the mitochondrial DNA, and 11 supernumerary subunits COX4I, COX5A, COX5B, COX6A, COX6B, COX6C, COX7A, COX7B, COX7C, COX8 and NDUFA4, which are encoded in the nuclear genome. The complex exists as a monomer or a dimer and forms supercomplexes (SCs) in the inner mitochondrial membrane with NADH-ubiquinone oxidoreductase (complex I, CI) and ubiquinol-cytochrome c oxidoreductase (cytochrome b-c1 complex, complex III, CIII), resulting in different assemblies (supercomplex SCI(1)III(2)IV(1) and megacomplex MCI(2)III(2)IV(2)).

The protein resides in the mitochondrion inner membrane. The enzyme catalyses 4 Fe(II)-[cytochrome c] + O2 + 8 H(+)(in) = 4 Fe(III)-[cytochrome c] + 2 H2O + 4 H(+)(out). Component of the cytochrome c oxidase, the last enzyme in the mitochondrial electron transport chain which drives oxidative phosphorylation. The respiratory chain contains 3 multisubunit complexes succinate dehydrogenase (complex II, CII), ubiquinol-cytochrome c oxidoreductase (cytochrome b-c1 complex, complex III, CIII) and cytochrome c oxidase (complex IV, CIV), that cooperate to transfer electrons derived from NADH and succinate to molecular oxygen, creating an electrochemical gradient over the inner membrane that drives transmembrane transport and the ATP synthase. Cytochrome c oxidase is the component of the respiratory chain that catalyzes the reduction of oxygen to water. Electrons originating from reduced cytochrome c in the intermembrane space (IMS) are transferred via the dinuclear copper A center (CU(A)) of subunit 2 and heme A of subunit 1 to the active site in subunit 1, a binuclear center (BNC) formed by heme A3 and copper B (CU(B)). The BNC reduces molecular oxygen to 2 water molecules using 4 electrons from cytochrome c in the IMS and 4 protons from the mitochondrial matrix. The polypeptide is Cytochrome c oxidase subunit 3 (MT-CO3) (Pan troglodytes (Chimpanzee)).